The following is a 180-amino-acid chain: Segregation and condensation protein B (180 aa).

The protein belongs to the ScpB family. In terms of assembly, homodimer. Homodimerization may be required to stabilize the binding of ScpA to the Smc head domains. Component of a cohesin-like complex composed of ScpA, ScpB and the Smc homodimer, in which ScpA and ScpB bind to the head domain of Smc. The presence of the three proteins is required for the association of the complex with DNA.

Its subcellular location is the cytoplasm. Participates in chromosomal partition during cell division. May act via the formation of a condensin-like complex containing Smc and ScpA that pull DNA away from mid-cell into both cell halves. The chain is Segregation and condensation protein B from Staphylococcus aureus (strain USA300).